We begin with the raw amino-acid sequence, 226 residues long: uncharacterized protein (226 aa).

A run of 4 helical transmembrane segments spans residues 25 to 45, 54 to 74, 107 to 127, and 153 to 173; these read ALAW…IFLI, FLLF…YFIF, ELFL…YFFI, and TITI…CFSS.

The protein localises to the cell membrane. This is an uncharacterized protein from Mycoplasma genitalium (strain ATCC 33530 / DSM 19775 / NCTC 10195 / G37) (Mycoplasmoides genitalium).